Consider the following 157-residue polypeptide: Endoribonuclease YbeY (157 aa).

Zn(2+)-binding residues include histidine 114, histidine 118, and histidine 124.

Belongs to the endoribonuclease YbeY family. Zn(2+) is required as a cofactor.

It localises to the cytoplasm. Single strand-specific metallo-endoribonuclease involved in late-stage 70S ribosome quality control and in maturation of the 3' terminus of the 16S rRNA. This is Endoribonuclease YbeY from Salmonella dublin (strain CT_02021853).